Consider the following 849-residue polypeptide: Protein translocase subunit SecA (849 aa).

ATP is bound by residues glutamine 85, 103 to 107, and aspartate 493; that span reads GEGKT. Cysteine 832, cysteine 834, cysteine 843, and histidine 844 together coordinate Zn(2+).

Belongs to the SecA family. Monomer and homodimer. Part of the essential Sec protein translocation apparatus which comprises SecA, SecYEG and auxiliary proteins SecDF. Other proteins may also be involved. Requires Zn(2+) as cofactor.

It localises to the cell membrane. It is found in the cytoplasm. The catalysed reaction is ATP + H2O + cellular proteinSide 1 = ADP + phosphate + cellular proteinSide 2.. In terms of biological role, part of the Sec protein translocase complex. Interacts with the SecYEG preprotein conducting channel. Has a central role in coupling the hydrolysis of ATP to the transfer of proteins into and across the cell membrane, serving as an ATP-driven molecular motor driving the stepwise translocation of polypeptide chains across the membrane. This Streptococcus thermophilus (strain ATCC BAA-250 / LMG 18311) protein is Protein translocase subunit SecA.